A 459-amino-acid chain; its full sequence is Bifunctional protein GlmU (459 aa).

The tract at residues 1–230 (MSNRFAVILA…FDETLGVNDR (230 aa)) is pyrophosphorylase. Residues 9 to 12 (LAAG), lysine 23, glutamine 73, and 78 to 79 (GT) contribute to the UDP-N-acetyl-alpha-D-glucosamine site. Mg(2+) is bound at residue aspartate 103. Residues glycine 140, glutamate 155, asparagine 170, and asparagine 228 each contribute to the UDP-N-acetyl-alpha-D-glucosamine site. Asparagine 228 provides a ligand contact to Mg(2+). Positions 231–251 (VALSQAEVIMKNRINHKNMVN) are linker. The tract at residues 252-459 (GVTIIDPSNT…VDQLLNKKKS (208 aa)) is N-acetyltransferase. Positions 333 and 351 each coordinate UDP-N-acetyl-alpha-D-glucosamine. The Proton acceptor role is filled by histidine 363. 2 residues coordinate UDP-N-acetyl-alpha-D-glucosamine: tyrosine 366 and asparagine 377. Acetyl-CoA-binding positions include 386-387 (NY), alanine 423, and arginine 440.

It in the N-terminal section; belongs to the N-acetylglucosamine-1-phosphate uridyltransferase family. The protein in the C-terminal section; belongs to the transferase hexapeptide repeat family. In terms of assembly, homotrimer. Mg(2+) is required as a cofactor.

It localises to the cytoplasm. The catalysed reaction is alpha-D-glucosamine 1-phosphate + acetyl-CoA = N-acetyl-alpha-D-glucosamine 1-phosphate + CoA + H(+). It carries out the reaction N-acetyl-alpha-D-glucosamine 1-phosphate + UTP + H(+) = UDP-N-acetyl-alpha-D-glucosamine + diphosphate. It functions in the pathway nucleotide-sugar biosynthesis; UDP-N-acetyl-alpha-D-glucosamine biosynthesis; N-acetyl-alpha-D-glucosamine 1-phosphate from alpha-D-glucosamine 6-phosphate (route II): step 2/2. It participates in nucleotide-sugar biosynthesis; UDP-N-acetyl-alpha-D-glucosamine biosynthesis; UDP-N-acetyl-alpha-D-glucosamine from N-acetyl-alpha-D-glucosamine 1-phosphate: step 1/1. Its pathway is bacterial outer membrane biogenesis; LPS lipid A biosynthesis. Catalyzes the last two sequential reactions in the de novo biosynthetic pathway for UDP-N-acetylglucosamine (UDP-GlcNAc). The C-terminal domain catalyzes the transfer of acetyl group from acetyl coenzyme A to glucosamine-1-phosphate (GlcN-1-P) to produce N-acetylglucosamine-1-phosphate (GlcNAc-1-P), which is converted into UDP-GlcNAc by the transfer of uridine 5-monophosphate (from uridine 5-triphosphate), a reaction catalyzed by the N-terminal domain. This Bacillus cytotoxicus (strain DSM 22905 / CIP 110041 / 391-98 / NVH 391-98) protein is Bifunctional protein GlmU.